The chain runs to 370 residues: E3 ubiquitin-protein ligase E3D (370 aa).

N-acetylalanine is present on alanine 2. Residues 129 to 159 (PLPSENWSALVGEWCCHPDPFANKPLHPREN) carry the BRAT1-like motif motif. Cysteine 144 provides a ligand contact to Zn(2+). Residues 214–236 (QPSEGSFPNIPRSQFVQSVIARC) are interaction with UBE2C. The interval 332–368 (LPSTTCLELLLILSRNNASLPLSLRQMNSFQLWCSHC) is HECT-like.

In terms of assembly, interacts with UBE2C/UbcH10 (E2 ubiquitin-conjugating enzyme). In vitro, interacts with cyclin-B. Ubiquitinated by UBCH10 (E2 ubiquitin-conjugating enzyme).

Its subcellular location is the cytoplasm. The enzyme catalyses S-ubiquitinyl-[E2 ubiquitin-conjugating enzyme]-L-cysteine + [acceptor protein]-L-lysine = [E2 ubiquitin-conjugating enzyme]-L-cysteine + N(6)-ubiquitinyl-[acceptor protein]-L-lysine.. Its pathway is protein modification; protein ubiquitination. Its function is as follows. E3 ubiquitin-protein ligase which accepts ubiquitin from specific E2 ubiquitin-conjugating enzymes, and transfers it to substrates, generally promoting their degradation by the proteasome. Independently of its E3 ubiquitin-protein ligase activity, acts as an inhibitor of CPSF3 endonuclease activity by blocking CPSF3 active site. This Rattus norvegicus (Rat) protein is E3 ubiquitin-protein ligase E3D (Ube3d).